A 108-amino-acid chain; its full sequence is Putative bolA-like protein K11H12.1 (108 aa).

A disordered region spans residues 89–108 (SKWDGQKQEDSPTCRGGFGK).

It belongs to the BolA/IbaG family.

The polypeptide is Putative bolA-like protein K11H12.1 (Caenorhabditis elegans).